A 380-amino-acid chain; its full sequence is Serpin B7 (380 aa).

Phosphoserine occurs at positions 217 and 223.

This sequence belongs to the serpin family. Ov-serpin subfamily. As to expression, predominantly expressed in mesangial cells. Expressed in the epidermis of the whole body.

Its subcellular location is the cytoplasm. Functionally, might function as an inhibitor of Lys-specific proteases. Might influence the maturation of megakaryocytes via its action as a serpin. The protein is Serpin B7 (SERPINB7) of Homo sapiens (Human).